Consider the following 93-residue polypeptide: Small ribosomal subunit protein bS20 (93 aa).

The protein belongs to the bacterial ribosomal protein bS20 family.

Its function is as follows. Binds directly to 16S ribosomal RNA. This is Small ribosomal subunit protein bS20 from Dictyoglomus turgidum (strain DSM 6724 / Z-1310).